We begin with the raw amino-acid sequence, 32 residues long: Basic phospholipase A2 (32 aa).

Residues Tyr26, Gly28, and Gly30 each coordinate Ca(2+).

This sequence belongs to the phospholipase A2 family. Group II subfamily. It depends on Ca(2+) as a cofactor. Expressed by the venom gland.

Its subcellular location is the secreted. It carries out the reaction a 1,2-diacyl-sn-glycero-3-phosphocholine + H2O = a 1-acyl-sn-glycero-3-phosphocholine + a fatty acid + H(+). In terms of biological role, snake venom phospholipase A2 (PLA2) that inhibits neuromuscular transmission by blocking acetylcholine release from the nerve termini. PLA2 catalyzes the calcium-dependent hydrolysis of the 2-acyl groups in 3-sn-phosphoglycerides. This is Basic phospholipase A2 from Gloydius halys (Chinese water mocassin).